Consider the following 216-residue polypeptide: Probable transaldolase (216 aa).

Catalysis depends on lysine 83, which acts as the Schiff-base intermediate with substrate.

Belongs to the transaldolase family. Type 3B subfamily.

It is found in the cytoplasm. The enzyme catalyses D-sedoheptulose 7-phosphate + D-glyceraldehyde 3-phosphate = D-erythrose 4-phosphate + beta-D-fructose 6-phosphate. Its pathway is carbohydrate degradation; pentose phosphate pathway; D-glyceraldehyde 3-phosphate and beta-D-fructose 6-phosphate from D-ribose 5-phosphate and D-xylulose 5-phosphate (non-oxidative stage): step 2/3. Transaldolase is important for the balance of metabolites in the pentose-phosphate pathway. This Thermosipho africanus (strain TCF52B) protein is Probable transaldolase.